Consider the following 655-residue polypeptide: Threonine--tRNA ligase (655 aa).

The TGS domain maps to 1-66 (MIDLVFPDGS…TGERKFEILT (66 aa)). The segment at 248 to 540 (DHRKLGKTMD…LLENFAGALP (293 aa)) is catalytic. Positions 340, 391, and 517 each coordinate Zn(2+).

It belongs to the class-II aminoacyl-tRNA synthetase family. In terms of assembly, homodimer. It depends on Zn(2+) as a cofactor.

The protein localises to the cytoplasm. It catalyses the reaction tRNA(Thr) + L-threonine + ATP = L-threonyl-tRNA(Thr) + AMP + diphosphate + H(+). In terms of biological role, catalyzes the attachment of threonine to tRNA(Thr) in a two-step reaction: L-threonine is first activated by ATP to form Thr-AMP and then transferred to the acceptor end of tRNA(Thr). Also edits incorrectly charged L-seryl-tRNA(Thr). The polypeptide is Threonine--tRNA ligase (Caulobacter vibrioides (strain ATCC 19089 / CIP 103742 / CB 15) (Caulobacter crescentus)).